A 275-amino-acid polypeptide reads, in one-letter code: Diaminopimelate epimerase (275 aa).

Positions 12, 45, and 65 each coordinate substrate. Cysteine 74 serves as the catalytic Proton donor. Substrate is bound by residues 75 to 76 (GN), asparagine 158, asparagine 191, and 209 to 210 (ER). Cysteine 218 acts as the Proton acceptor in catalysis. Residue 219 to 220 (GT) coordinates substrate.

The protein belongs to the diaminopimelate epimerase family. As to quaternary structure, homodimer.

Its subcellular location is the cytoplasm. It catalyses the reaction (2S,6S)-2,6-diaminopimelate = meso-2,6-diaminopimelate. It functions in the pathway amino-acid biosynthesis; L-lysine biosynthesis via DAP pathway; DL-2,6-diaminopimelate from LL-2,6-diaminopimelate: step 1/1. In terms of biological role, catalyzes the stereoinversion of LL-2,6-diaminopimelate (L,L-DAP) to meso-diaminopimelate (meso-DAP), a precursor of L-lysine and an essential component of the bacterial peptidoglycan. This chain is Diaminopimelate epimerase, found in Shewanella denitrificans (strain OS217 / ATCC BAA-1090 / DSM 15013).